The chain runs to 740 residues: NAD(P)H-quinone oxidoreductase subunit 5, chloroplastic (740 aa).

The next 16 helical transmembrane spans lie at 9-29 (WIIPFIPLPVPMLIGAGLILF), 40-60 (WAFQSVLLLSIVMVFSIYLSI), 89-109 (IDPLTSIMSILITTVGIMVLI), 125-145 (FAYMSFFSTSMLGLVTSSNLI), 147-167 (IYIFWELVGLCSYLLIGFWFT), 185-205 (GDFGLLLGILGFYWITGSFEF), 219-239 (NEVDFLFVTLCAVLLFAGAVA), 258-278 (TPISALIHAATMVAAGIFLVA), 286-306 (VIPYIMYLISVIGIITVLLGA), 327-347 (LGYMMLALGMGSYRSALFHLI), 354-374 (ALLFLGSGSIIHSMETIVGYS), 396-416 (ITFLLGTLSLCGIPPLACFWS), 425-445 (WLYSPIFAIIAWATAGLTAFY), 543-563 (LFPIFVLGLFTLFVGSLGIPF), 602-622 (VLSVSIAYFGIFIASFLYKPI), and 717-737 (SYLFLYLAYVLVFLLVYYLLF).

This sequence belongs to the complex I subunit 5 family. As to quaternary structure, NDH is composed of at least 16 different subunits, 5 of which are encoded in the nucleus.

The protein localises to the plastid. It is found in the chloroplast thylakoid membrane. It catalyses the reaction a plastoquinone + NADH + (n+1) H(+)(in) = a plastoquinol + NAD(+) + n H(+)(out). The catalysed reaction is a plastoquinone + NADPH + (n+1) H(+)(in) = a plastoquinol + NADP(+) + n H(+)(out). NDH shuttles electrons from NAD(P)H:plastoquinone, via FMN and iron-sulfur (Fe-S) centers, to quinones in the photosynthetic chain and possibly in a chloroplast respiratory chain. The immediate electron acceptor for the enzyme in this species is believed to be plastoquinone. Couples the redox reaction to proton translocation, and thus conserves the redox energy in a proton gradient. The protein is NAD(P)H-quinone oxidoreductase subunit 5, chloroplastic (ndhF) of Nicotiana tomentosiformis (Tobacco).